Consider the following 102-residue polypeptide: Small ribosomal subunit protein uS10 (102 aa).

Belongs to the universal ribosomal protein uS10 family. As to quaternary structure, part of the 30S ribosomal subunit.

Its function is as follows. Involved in the binding of tRNA to the ribosomes. The chain is Small ribosomal subunit protein uS10 from Brucella abortus (strain S19).